A 685-amino-acid chain; its full sequence is MPEQNRILCRELSLLAFNRRVLAQAEDQNVPLLERLRFLCIVSSNLDEFFEVRMAWLKREHKRCPQRRLDNGKMPSETIADVTEAARSLIRHQYDLFNNVLQPELAQEGIHFYRRRNWTDTQKKWIEDYFDRELLPILTPIGLDPSHPFPRPLNKSLNFAVELDGTDAFGRPSGMAIVQAPRILPRVVPLPSELCGGGHGFVFLSSILHAHVGKLFPGMNVKGCHQFRLTRDSDLTVDEEDLQNLRAAIQNELHDREYGDGVRLEVADTCPAYIRDFLLAQFKLTAAELYQVKGPVNLVRLNAVPDLVNRPDLKFPTHTPGRLKALGKTASIFDLVRQSPILLHHPYQSFDPVVEMMREAAADPAVLAVKMTIYRTGTRSELVRALMKAALAGKQVTVVVELMARFDEANNVNWAKQLEEAGAHVVYGVFGYKVHAKMALVIRREDGVLKRYAHLGTGNYHQGTSRIYTDFGLITADEQITADVNILFMEITGLGKPGRLNKLYQSPFTLHKMVIDRIARETEHAKAGKPARITAKMNSLIEPTVIEALYRASAAGVQIDLIVRGMCTLRPGVKGLSENIRVRSIVGRQLEHARVYYFHNNGTDDTFISSADWMGRNFFRRIETATPITAPELKKRVIHEGLTMALDDNTHAWLMQPDGGYIRAAPAEGESEADLQNDLWTLLGG.

Asn-45 lines the ATP pocket. 2 residues coordinate Mg(2+): Arg-375 and Arg-405. The Phosphohistidine intermediate role is filled by His-435. Positions 468, 564, and 592 each coordinate ATP.

The protein belongs to the polyphosphate kinase 1 (PPK1) family. Mg(2+) is required as a cofactor. An intermediate of this reaction is the autophosphorylated ppk in which a phosphate is covalently linked to a histidine residue through a N-P bond.

The enzyme catalyses [phosphate](n) + ATP = [phosphate](n+1) + ADP. Functionally, catalyzes the reversible transfer of the terminal phosphate of ATP to form a long-chain polyphosphate (polyP). This chain is Polyphosphate kinase, found in Neisseria meningitidis serogroup B (strain ATCC BAA-335 / MC58).